The chain runs to 464 residues: Glutamate--tRNA ligase 1 (464 aa).

The short motif at 8–18 (PSPTGHLHVGG) is the 'HIGH' region element. Positions 231–235 (PLSKR) match the 'KMSKS' region motif. ATP is bound at residue lysine 234.

Belongs to the class-I aminoacyl-tRNA synthetase family. Glutamate--tRNA ligase type 1 subfamily. Monomer.

The protein resides in the cytoplasm. The enzyme catalyses tRNA(Glu) + L-glutamate + ATP = L-glutamyl-tRNA(Glu) + AMP + diphosphate. In terms of biological role, catalyzes the attachment of glutamate to tRNA(Glu) in a two-step reaction: glutamate is first activated by ATP to form Glu-AMP and then transferred to the acceptor end of tRNA(Glu). This chain is Glutamate--tRNA ligase 1, found in Thermotoga petrophila (strain ATCC BAA-488 / DSM 13995 / JCM 10881 / RKU-1).